The chain runs to 502 residues: Cytochrome P450 CYP94D109 (502 aa).

A helical membrane pass occupies residues Ser3–Ser23. Heme is bound at residue Cys437.

Belongs to the cytochrome P450 family. As to expression, mainly expressed in leaves and, at low levels, in roots, fruits and stems.

It localises to the membrane. Its pathway is steroid metabolism; cholesterol metabolism. Functionally, involved in the biosynthesis of spiroketal steroid and saponin natural products from cholesterol such as diosgenin and analogs (e.g. furostanol and spirostanol), plant defense compounds used as main precursors for the industrial production of steroid hormones. During the 5,6-spiroketalization of cholesterol, may catalyze the 27-monohydroxylation of furostanol-type steroid to an intermediate product that undergoes a stereospecific formation of the terminal heterocycle to yield diosgenin. The protein is Cytochrome P450 CYP94D109 of Paris polyphylla (Daiswa polyphylla).